Here is a 396-residue protein sequence, read N- to C-terminus: Dimethyladenosine transferase 2, mitochondrial (396 aa).

A mitochondrion-targeting transit peptide spans 1–43; the sequence is MRGPAMRLPPRIALSALARGPSCILGSGAATRKDWQTRNRRGF. The segment at 43-71 is disordered; it reads FSDFNIEPLPDSDLEESSPWTSRNRSEPT. S-adenosyl-L-methionine contacts are provided by isoleucine 74, glutamate 123, and aspartate 149. Residues 328–329 are DNA-binding; sequence KR.

This sequence belongs to the class I-like SAM-binding methyltransferase superfamily. rRNA adenine N(6)-methyltransferase family. KsgA subfamily. Homodimer. Component of the mitochondrial transcription initiation complex, composed at least of TFB2M, TFAM and POLRMT. In this complex TFAM recruits POLRMT to the promoter whereas TFB2M induces structural changes in POLRMT to enable promoter opening and trapping of the DNA non-template strand. Interacts with mitochondrial RNA polymerase POLRMT. Interacts with TFAM. As to expression, ubiquitously expressed.

Its subcellular location is the mitochondrion. The enzyme catalyses adenosine in rRNA + S-adenosyl-L-methionine = N(6)-methyladenosine in rRNA + S-adenosyl-L-homocysteine + H(+). Its function is as follows. S-adenosyl-L-methionine-dependent rRNA methyltransferase which may methylate two specific adjacent adenosines in the loop of a conserved hairpin near the 3'-end of 12S mitochondrial rRNA. Component of the mitochondrial transcription initiation complex, composed at least of TFB2M, TFAM and POLRMT that is required for basal transcription of mitochondrial DNA. In this complex, TFAM recruits POLRMT to a specific promoter whereas TFB2M induces structural changes in POLRMT to enable promoter opening and trapping of the DNA non-template strand. Stimulates transcription independently of the methyltransferase activity. In Mus musculus (Mouse), this protein is Dimethyladenosine transferase 2, mitochondrial.